Here is a 363-residue protein sequence, read N- to C-terminus: Carbamoyl phosphate synthase small chain (363 aa).

CPSase regions lie at residues 1 to 168 (MTKR…ASPG) and 1 to 172 (MTKR…DGKR). L-glutamine-binding residues include Ser-46, Gly-220, and Gly-222. Residues 172–359 (RVVLVDYGVK…MEMMNVKEEG (188 aa)) enclose the Glutamine amidotransferase type-1 domain. The active-site Nucleophile is Cys-247. Positions 248, 251, 289, 291, and 292 each coordinate L-glutamine. Residues His-332 and Glu-334 contribute to the active site.

This sequence belongs to the CarA family. As to quaternary structure, composed of two chains; the small (or glutamine) chain promotes the hydrolysis of glutamine to ammonia, which is used by the large (or ammonia) chain to synthesize carbamoyl phosphate. Tetramer of heterodimers (alpha,beta)4.

The catalysed reaction is hydrogencarbonate + L-glutamine + 2 ATP + H2O = carbamoyl phosphate + L-glutamate + 2 ADP + phosphate + 2 H(+). It carries out the reaction L-glutamine + H2O = L-glutamate + NH4(+). It functions in the pathway amino-acid biosynthesis; L-arginine biosynthesis; carbamoyl phosphate from bicarbonate: step 1/1. It participates in pyrimidine metabolism; UMP biosynthesis via de novo pathway; (S)-dihydroorotate from bicarbonate: step 1/3. Functionally, small subunit of the glutamine-dependent carbamoyl phosphate synthetase (CPSase). CPSase catalyzes the formation of carbamoyl phosphate from the ammonia moiety of glutamine, carbonate, and phosphate donated by ATP, constituting the first step of 2 biosynthetic pathways, one leading to arginine and/or urea and the other to pyrimidine nucleotides. The small subunit (glutamine amidotransferase) binds and cleaves glutamine to supply the large subunit with the substrate ammonia. This Listeria innocua serovar 6a (strain ATCC BAA-680 / CLIP 11262) protein is Carbamoyl phosphate synthase small chain.